The sequence spans 509 residues: ATP synthase subunit beta, mitochondrial (509 aa).

The N-terminal 32 residues, 1-32 (MVLPRLIPRLSRSAFKVAQANNRVFNAPFRGM), are a transit peptide targeting the mitochondrion. 189-196 (GAGVGKTV) contributes to the ATP binding site.

In terms of assembly, F-type ATP synthases have 2 components, the catalytic core F(1) and the membrane-embedded component F(0), linked together by a central stalk and a peripheral stalk. The central stalk, also called rotor shaft, is often seen as part of F(1). The peripheral stalk is seen as part of F(0). F(0) contains the membrane channel next to the rotor. F-type ATP synthases form dimers but each monomer functions independently in ATP generation. The dimer consists of 17 different polypeptides: ATP1 (subunit alpha, 3 molecules per monomer, part of F(1)), ATP2 (subunit beta, 3 copies per monomer, part of F(1)), ATP3 (subunit gamma, part of the central stalk), ATP4 (subunit b, part of the peripheral stalk), ATP5/OSCP (subunit 5/OSCP, part of the peripheral stalk), ATP6 (subunit a, part of the peripheral stalk), ATP7 (subunit d, part of the peripheral stalk), ATP8 (subunit 8, part of the peripheral stalk), OLI1 (subunit c, part of the rotor, 10 molecules per monomer), ATP14 (subunit h, part of the peripheral stalk), ATP15 (subunit epsilon, part of the central stalk), ATP16 (subunit delta, part of the central stalk), ATP17 (subunit f, part of the peripheral stalk), ATP18 (subunit i/j, part of the peripheral stalk), ATP19 (subunit k, dimer-specific, at interface between monomers), ATP20 (subunit g, at interface between monomers), TIM11 (subunit e, at interface between monomers).

Its subcellular location is the mitochondrion inner membrane. The catalysed reaction is ATP + H2O + 4 H(+)(in) = ADP + phosphate + 5 H(+)(out). Its function is as follows. Mitochondrial membrane ATP synthase (F(1)F(0) ATP synthase or Complex V) produces ATP from ADP in the presence of a proton gradient across the membrane which is generated by electron transport complexes of the respiratory chain. F-type ATP synthases consist of two structural domains, F(1) - containing the extramembraneous catalytic core, and F(0) - containing the membrane proton channel, linked together by a central stalk and a peripheral stalk. During catalysis, ATP synthesis in the catalytic domain of F(1) is coupled via a rotary mechanism of the central stalk subunits to proton translocation. Subunits alpha/ATP1 and beta/ATP2 form the catalytic core in F(1). Rotation of the central stalk against the surrounding alpha/ATP1(3)beta/ATP2(3) subunits leads to hydrolysis of ATP in three separate catalytic sites on the beta/ATP2 subunits. In Yarrowia lipolytica (strain CLIB 122 / E 150) (Yeast), this protein is ATP synthase subunit beta, mitochondrial.